Here is a 187-residue protein sequence, read N- to C-terminus: ECF RNA polymerase sigma factor SigK (187 aa).

The sigma-70 factor domain-2 stretch occupies residues 30 to 96 (YDHTCTRVYG…RAVDRVRAEQ (67 aa)). The short motif at 53–56 (ETTQ) is the Interaction with polymerase core subunit RpoC element. The interval 133-182 (CLDGLTDTQRQCIELAYYGGLTYAEVSQRLATNLSTIKSRMRDALRGLRN) is sigma-70 factor domain-4. The segment at residues 155–174 (YAEVSQRLATNLSTIKSRMR) is a DNA-binding region (H-T-H motif).

This sequence belongs to the sigma-70 factor family. ECF subfamily. In terms of assembly, interacts transiently with the RNA polymerase catalytic core formed by RpoA, RpoB, RpoC and RpoZ (2 alpha, 1 beta, 1 beta' and 1 omega subunit) to form the RNA polymerase holoenzyme that can initiate transcription. Interacts (via sigma-70 factor domain 4) with anti-sigma-K factor RskA.

Its function is as follows. Sigma factors are initiation factors that promote the attachment of RNA polymerase to specific initiation sites and are then released. Extracytoplasmic function (ECF) sigma factors are held in an inactive form by an anti-sigma factor until released by regulated intramembrane proteolysis. This is ECF RNA polymerase sigma factor SigK (sigK) from Mycobacterium ulcerans (strain Agy99).